We begin with the raw amino-acid sequence, 172 residues long: Myosin regulatory light polypeptide 9 (172 aa).

Residues 1-16 (MSSKRAKAKTTKKRPQ) are compositionally biased toward basic residues. Positions 1-20 (MSSKRAKAKTTKKRPQRATS) are disordered. Ser-2 bears the N-acetylserine mark. Thr-19 carries the phosphothreonine; by MLCK, CIT and ROCK2 modification. Ser-20 carries the phosphoserine; by CDC42BP, CIT, MLCK, PAK1, ROCK1, ROCK2, DAPK1, DAPK2 and ZIPK/DAPK3 modification. EF-hand domains are found at residues 29-64 (SQIQ…LGKN), 98-133 (DPED…MGDR), and 134-169 (FTDE…GAKD). Ca(2+) contacts are provided by Asp-42, Asn-44, Asp-46, and Asp-53.

In terms of assembly, myosin is a hexamer of 2 heavy chains and 4 light chains: interacts with myosin heavy chain MYO19. Interacts with LUZP1; the interaction results in inhibition of phosphorylation of MYL9 by DAPK3. Post-translationally, phosphorylation increases the actin-activated myosin ATPase activity and thereby regulates the contractile activity. It is required to generate the driving force in the migration of the cells but not necessary for localization of myosin-2 at the leading edge. Phosphorylation is required for myotube formation. Phosphorylated by DAPK3; DAPK3-mediated phosphorylation is inhibited by LUZP1.

Its subcellular location is the cytoplasm. The protein resides in the cytoskeleton. It localises to the cell cortex. Myosin regulatory subunit that plays an important role in regulation of both smooth muscle and nonmuscle cell contractile activity via its phosphorylation. Implicated in cytokinesis, receptor capping, and cell locomotion. In myoblasts, regulates PIEZO1-dependent cortical actomyosin assembly involved in myotube formation. This is Myosin regulatory light polypeptide 9 (Myl9) from Mus musculus (Mouse).